The following is a 288-amino-acid chain: Homoserine kinase (288 aa).

79–89 (PLARGLGSSSS) serves as a coordination point for ATP.

Belongs to the GHMP kinase family. Homoserine kinase subfamily.

It localises to the cytoplasm. It catalyses the reaction L-homoserine + ATP = O-phospho-L-homoserine + ADP + H(+). Its pathway is amino-acid biosynthesis; L-threonine biosynthesis; L-threonine from L-aspartate: step 4/5. Catalyzes the ATP-dependent phosphorylation of L-homoserine to L-homoserine phosphate. This Streptococcus sanguinis (strain SK36) protein is Homoserine kinase.